Consider the following 244-residue polypeptide: MTQIIPALDLIDGEVVRLVKGDYEQKKVYKYNPLEKFKEYEKAGAKELHLVDLTGAKDPSKRQLALIEKLAKEVNVNLQVGGGIRSKEEVKALLDCGVKRVVIGSMAIKDATLCLEILKEFGSEAIVLALDTILKEDYVVAVNAWQEASDKKLMEVLDFYSNKGLKHILCTDISKDGTMQGVNVRLYKLIHEIFPNICIQASGGVASLKDLENLKGICSGVIVGKALLDGVFSVEEGIRCLQNA.

Asp9 functions as the Proton acceptor in the catalytic mechanism. Asp131 (proton donor) is an active-site residue.

It belongs to the HisA/HisF family.

It is found in the cytoplasm. The catalysed reaction is 1-(5-phospho-beta-D-ribosyl)-5-[(5-phospho-beta-D-ribosylamino)methylideneamino]imidazole-4-carboxamide = 5-[(5-phospho-1-deoxy-D-ribulos-1-ylimino)methylamino]-1-(5-phospho-beta-D-ribosyl)imidazole-4-carboxamide. The protein operates within amino-acid biosynthesis; L-histidine biosynthesis; L-histidine from 5-phospho-alpha-D-ribose 1-diphosphate: step 4/9. This is 1-(5-phosphoribosyl)-5-[(5-phosphoribosylamino)methylideneamino] imidazole-4-carboxamide isomerase from Campylobacter jejuni subsp. jejuni serotype O:6 (strain 81116 / NCTC 11828).